Here is a 224-residue protein sequence, read N- to C-terminus: 7-cyano-7-deazaguanine synthase (224 aa).

10-20 is an ATP binding site; sequence LSGGLDSATVV. Zn(2+)-binding residues include cysteine 189, cysteine 199, cysteine 202, and cysteine 205.

It belongs to the QueC family. Zn(2+) is required as a cofactor.

The enzyme catalyses 7-carboxy-7-deazaguanine + NH4(+) + ATP = 7-cyano-7-deazaguanine + ADP + phosphate + H2O + H(+). It participates in purine metabolism; 7-cyano-7-deazaguanine biosynthesis. In terms of biological role, catalyzes the ATP-dependent conversion of 7-carboxy-7-deazaguanine (CDG) to 7-cyano-7-deazaguanine (preQ(0)). This is 7-cyano-7-deazaguanine synthase from Pseudomonas aeruginosa (strain LESB58).